Consider the following 414-residue polypeptide: 2,3-diketo-5-methylthiopentyl-1-phosphate enolase (414 aa).

K99 functions as the Proton acceptor in the catalytic mechanism. Substrate is bound by residues K148, 174–177, H265, G338, and 360–361; these read KDDE and GG. K174, D176, and E177 together coordinate Mg(2+). An N6-carboxylysine modification is found at K174.

The protein belongs to the RuBisCO large chain family. Type IV subfamily. Homodimer. Requires Mg(2+) as cofactor.

The catalysed reaction is 5-methylsulfanyl-2,3-dioxopentyl phosphate = 2-hydroxy-5-methylsulfanyl-3-oxopent-1-enyl phosphate. Its pathway is amino-acid biosynthesis; L-methionine biosynthesis via salvage pathway; L-methionine from S-methyl-5-thio-alpha-D-ribose 1-phosphate: step 3/6. Its function is as follows. Catalyzes the enolization of 2,3-diketo-5-methylthiopentyl-1-phosphate (DK-MTP-1-P) into 2-hydroxy-3-keto-5-methylthiopentenyl-1-phosphate (HK-MTPenyl-1-P). The sequence is that of 2,3-diketo-5-methylthiopentyl-1-phosphate enolase from Bacillus mycoides (strain KBAB4) (Bacillus weihenstephanensis).